A 184-amino-acid polypeptide reads, in one-letter code: Protein GrpE (184 aa).

Residues 1 to 17 show a composition bias toward basic and acidic residues; that stretch reads MQHEDKTPEQQENKTPE. The segment at 1-39 is disordered; sequence MQHEDKTPEQQENKTPETELQQENAPATPQEAGAAGSID. Positions 18 to 27 are enriched in polar residues; sequence TELQQENAPA.

This sequence belongs to the GrpE family. In terms of assembly, homodimer.

It is found in the cytoplasm. In terms of biological role, participates actively in the response to hyperosmotic and heat shock by preventing the aggregation of stress-denatured proteins, in association with DnaK and GrpE. It is the nucleotide exchange factor for DnaK and may function as a thermosensor. Unfolded proteins bind initially to DnaJ; upon interaction with the DnaJ-bound protein, DnaK hydrolyzes its bound ATP, resulting in the formation of a stable complex. GrpE releases ADP from DnaK; ATP binding to DnaK triggers the release of the substrate protein, thus completing the reaction cycle. Several rounds of ATP-dependent interactions between DnaJ, DnaK and GrpE are required for fully efficient folding. The polypeptide is Protein GrpE (Methylobacillus flagellatus (strain ATCC 51484 / DSM 6875 / VKM B-1610 / KT)).